A 272-amino-acid chain; its full sequence is Glutamate racemase (272 aa).

Substrate is bound by residues 16–17 (DS) and 48–49 (YG). The active-site Proton donor/acceptor is the C79. A substrate-binding site is contributed by 80 to 81 (NT). C191 serves as the catalytic Proton donor/acceptor. Substrate is bound at residue 192–193 (TH).

It belongs to the aspartate/glutamate racemases family.

It catalyses the reaction L-glutamate = D-glutamate. It participates in cell wall biogenesis; peptidoglycan biosynthesis. Provides the (R)-glutamate required for cell wall biosynthesis. This Chlorobaculum tepidum (strain ATCC 49652 / DSM 12025 / NBRC 103806 / TLS) (Chlorobium tepidum) protein is Glutamate racemase.